We begin with the raw amino-acid sequence, 78 residues long: Large ribosomal subunit protein bL28 (78 aa).

Residues 1–21 (MSRVCQVTGKSPITGNNVSHA) form a disordered region. The span at 8–21 (TGKSPITGNNVSHA) shows a compositional bias: polar residues.

This sequence belongs to the bacterial ribosomal protein bL28 family.

In Hahella chejuensis (strain KCTC 2396), this protein is Large ribosomal subunit protein bL28.